Consider the following 1891-residue polypeptide: Transcription initiation factor TFIID subunit 1 (1891 aa).

Disordered stretches follow at residues 1–34 (MGPG…AGGG), 154–180 (KLMP…GVSE), and 197–224 (ASEK…SESK). Residues 1–435 (MGPGWAGLLQ…VTQLHWEDDI (435 aa)) form the Protein kinase 1 domain. Residues 156 to 165 (MPPPPPPPGP) are compositionally biased toward pro residues. Residues 197-208 (ASEKVDFSSSSD) show a composition bias toward low complexity. Ser328 carries the post-translational modification Phosphoserine; by autocatalysis. A disordered region spans residues 535 to 556 (PDEKEEATSNSPSKENKKESSL). The interval 538-997 (KEEATSNSPS…KIPNKPTQQK (460 aa)) is histone acetyltransferase (HAT). Lys565 carries the post-translational modification N6-acetyllysine. Residues Lys570 and Lys583 each participate in a glycyl lysine isopeptide (Lys-Gly) (interchain with G-Cter in SUMO2) cross-link. 3 disordered regions span residues 990 to 1009 (PNKP…KKTV), 1128 to 1148 (MLQN…QERK), and 1254 to 1278 (RLKR…MKER). Basic and acidic residues-rich tracts occupy residues 995–1004 (QQKDDKEPQP), 1139–1148 (SREREEQERK), and 1254–1270 (RLKR…PPEK). Positions 1216–1294 (VRIRTTKDEE…CGACGAIGHM (79 aa)) form a DNA-binding region, HMG box. The tract at residues 1363 to 1650 (VLKFPKQQLP…TAKEAALEEA (288 aa)) is interaction with ASF1A and ASF1B. A Nuclear localization signal motif is present at residues 1372–1379 (PPKKKRRV). Bromo domains follow at residues 1397–1505 (RRRT…LKEK) and 1519–1628 (LLDD…LTEY). Positions 1446-1891 (MDLQTLRENV…AGDTDLDSDE (446 aa)) constitute a Protein kinase 2 domain. Disordered regions lie at residues 1651 to 1676 (ELES…NNTS) and 1690 to 1891 (SNLS…DSDE). Residues 1659–1668 (TPGPYTPQPP) are compositionally biased toward pro residues. 2 positions are modified to phosphoserine: Ser1690 and Ser1693. The segment covering 1690 to 1708 (SNLSVLDIPSATSEKQLTQ) has biased composition (polar residues). Acidic residues-rich tracts occupy residues 1711 to 1723 (GDGD…EEEG) and 1741 to 1756 (EGED…EEGD). Positions 1764 to 1778 (LSESGSDSDVESGSL) are enriched in low complexity. Phosphoserine occurs at positions 1799, 1802, and 1820. Polar residues predominate over residues 1830 to 1840 (KSNTQDTSFSS). A compositionally biased stretch (acidic residues) spans 1846-1855 (VSEEEEDEEE). Position 1847 is a phosphoserine (Ser1847). Positions 1858–1867 (SGPSVLSQVH) are enriched in polar residues.

Belongs to the TAF1 family. As to quaternary structure, component of the TFIID basal transcription factor complex, composed of TATA-box-binding protein TBP, and a number of TBP-associated factors (TAFs). TFIID consists of at least TBP, TAF1, TAF2, TAF3, TAF4, TAF5, TAF6, TAF7, TAF8, TAF9, TAF10, TAF11, TAF12 and TAF13. Interacts with TAF7; the interaction is direct. TAF1, when part of the TFIID complex, interacts with C-terminus of TP53. Part of a TFIID-containing RNA polymerase II pre-initiation complex that is composed of TBP and at least GTF2A1, GTF2A2, GTF2E1, GTF2E2, GTF2F1, GTF2H2, GTF2H3, GTF2H4, GTF2H5, GTF2B, TCEA1, ERCC2, ERCC3, TAF1, TAF2, TAF3, TAF4, TAF5, TAF6, TAF7, TAF8, TAF9, TAF10, TAF11, TAF12 and TAF13. Component of some MLL1/MLL complex, at least composed of the core components KMT2A/MLL1, ASH2L, HCFC1/HCF1, WDR5 and RBBP5, as well as the facultative components BACC1, CHD8, E2F6, HSP70, INO80C, KANSL1, LAS1L, MAX, MCRS1, MGA, KAT8/MOF, PELP1, PHF20, PRP31, RING2, RUVB1/TIP49A, RUVB2/TIP49B, SENP3, TAF1, TAF4, TAF6, TAF7, TAF9 and TEX10. RB1 interacts with the N-terminal domain of TAF1. Interacts with ASF1A and ASF1B. Interacts (via bromo domains) with acetylated lysine residues on the N-terminus of histone H1.4, H2A, H2B, H3 and H4 (in vitro). Mg(2+) serves as cofactor. In terms of processing, phosphorylated by casein kinase II in vitro.

The protein localises to the nucleus. It carries out the reaction L-seryl-[protein] + ATP = O-phospho-L-seryl-[protein] + ADP + H(+). The enzyme catalyses L-threonyl-[protein] + ATP = O-phospho-L-threonyl-[protein] + ADP + H(+). It catalyses the reaction L-lysyl-[protein] + acetyl-CoA = N(6)-acetyl-L-lysyl-[protein] + CoA + H(+). Autophosphorylates on Ser residues. Inhibited by retinoblastoma tumor suppressor protein, RB1. Binding to TAF1 or CIITA inhibits the histone acetyltransferase activity. Functionally, the TFIID basal transcription factor complex plays a major role in the initiation of RNA polymerase II (Pol II)-dependent transcription. TFIID recognizes and binds promoters with or without a TATA box via its subunit TBP, a TATA-box-binding protein, and promotes assembly of the pre-initiation complex (PIC). The TFIID complex consists of TBP and TBP-associated factors (TAFs), including TAF1, TAF2, TAF3, TAF4, TAF5, TAF6, TAF7, TAF8, TAF9, TAF10, TAF11, TAF12 and TAF13. TAF1 is the largest component and core scaffold of the TFIID complex, involved in nucleating complex assembly. TAF1 forms a promoter DNA binding subcomplex of TFIID, together with TAF7 and TAF2. Contains novel N- and C-terminal Ser/Thr kinase domains which can autophosphorylate or transphosphorylate other transcription factors. Phosphorylates TP53 on 'Thr-55' which leads to MDM2-mediated degradation of TP53. Phosphorylates GTF2A1 and GTF2F1 on Ser residues. Possesses DNA-binding activity. Exhibits histone acetyltransferase activity towards histones H3 and H4. Essential for progression of the G1 phase of the cell cycle. The chain is Transcription initiation factor TFIID subunit 1 from Mus musculus (Mouse).